The chain runs to 341 residues: Eukaryotic translation initiation factor 3 subunit I (341 aa).

WD repeat units lie at residues 8–49 (GHER…GTYH), 50–91 (GHQG…HTWE), 145–184 (CDESKATVAGWSYLAKYIIAGHEDGSVSQYDAKNGDQLHS), 189–228 (DMGSEIRDLQWSQDRTYFITASKDKTAKLVTARDLEVLKT), and 286–325 (GHFGPLNYVAAEPNGKGYASGGEDGYVRVHQFDKGYFDFM).

This sequence belongs to the eIF-3 subunit I family. As to quaternary structure, component of the eukaryotic translation initiation factor 3 (eIF-3) complex.

The protein localises to the cytoplasm. Component of the eukaryotic translation initiation factor 3 (eIF-3) complex, which is involved in protein synthesis of a specialized repertoire of mRNAs and, together with other initiation factors, stimulates binding of mRNA and methionyl-tRNAi to the 40S ribosome. The eIF-3 complex specifically targets and initiates translation of a subset of mRNAs involved in cell proliferation. The chain is Eukaryotic translation initiation factor 3 subunit I from Pyricularia oryzae (strain 70-15 / ATCC MYA-4617 / FGSC 8958) (Rice blast fungus).